The chain runs to 411 residues: Arginine deiminase (411 aa).

Catalysis depends on Cys-401, which acts as the Amidino-cysteine intermediate.

The protein belongs to the arginine deiminase family.

It is found in the cytoplasm. The catalysed reaction is L-arginine + H2O = L-citrulline + NH4(+). The protein operates within amino-acid degradation; L-arginine degradation via ADI pathway; carbamoyl phosphate from L-arginine: step 1/2. In Staphylococcus aureus (strain MRSA252), this protein is Arginine deiminase.